The following is a 393-amino-acid chain: Na(+)/H(+) antiporter NhaA 2 (393 aa).

Transmembrane regions (helical) follow at residues Ser-18–Leu-38, Leu-53–Leu-73, Ile-91–Phe-111, Gly-120–Gly-140, Val-149–Phe-169, Thr-172–Leu-192, Leu-208–Leu-228, Phe-263–Met-283, Val-294–Val-314, Gly-332–Phe-352, and Ile-363–Ser-383.

Belongs to the NhaA Na(+)/H(+) (TC 2.A.33) antiporter family.

It is found in the cell inner membrane. It carries out the reaction Na(+)(in) + 2 H(+)(out) = Na(+)(out) + 2 H(+)(in). In terms of biological role, na(+)/H(+) antiporter that extrudes sodium in exchange for external protons. The chain is Na(+)/H(+) antiporter NhaA 2 from Brucella anthropi (strain ATCC 49188 / DSM 6882 / CCUG 24695 / JCM 21032 / LMG 3331 / NBRC 15819 / NCTC 12168 / Alc 37) (Ochrobactrum anthropi).